Consider the following 229-residue polypeptide: MSLLEQLDKNIAASGGLIVSCQPVPGSPLDKPEIVAAMALAAEQAGAVAVRIEGIDNLRMTRSLVSVPIIGIIKRDLDDSPVRITPFLDDVDALAQAGAAIIAVDGTARQRPVAVEALLARIHHHHLLAMADCSSVDDGLACQRLGADIIGTTMSGYTTPDTPEEPDLPLVKALHDAGCRVIAEGRYNSPALAAEAIRYGAWAVTVGSAITRLEHICGWYNDALKKAAS.

It belongs to the NanE family.

It carries out the reaction an N-acyl-D-glucosamine 6-phosphate = an N-acyl-D-mannosamine 6-phosphate. Its pathway is amino-sugar metabolism; N-acetylneuraminate degradation; D-fructose 6-phosphate from N-acetylneuraminate: step 3/5. Its function is as follows. Converts N-acetylmannosamine-6-phosphate (ManNAc-6-P) to N-acetylglucosamine-6-phosphate (GlcNAc-6-P). In Salmonella agona (strain SL483), this protein is Putative N-acetylmannosamine-6-phosphate 2-epimerase.